Consider the following 101-residue polypeptide: MMSLLTPAVLLTQRLHTLTLSVSTPLGLVMTTFESSTLKDARLKLVSQKEVSGRLRLTLGAGRLLYLIQIFLATGTVQFQTMVLPSTDSVDSLPGTYLRKF.

Belongs to the orthobunyavirus NS-S protein family.

This chain is Non-structural protein NS-S (N), found in Equus caballus (Horse).